The primary structure comprises 800 residues: Aldehyde dehydrogenase family 16 member A1 (800 aa).

This sequence belongs to the aldehyde dehydrogenase family. Interacts with SPG21.

This is Aldehyde dehydrogenase family 16 member A1 (ALDH16A1) from Bos taurus (Bovine).